We begin with the raw amino-acid sequence, 132 residues long: Large ribosomal subunit protein uL14 (132 aa).

Belongs to the universal ribosomal protein uL14 family. Part of the 50S ribosomal subunit. Forms a cluster with proteins L3 and L24e, part of which may contact the 16S rRNA in 2 intersubunit bridges.

In terms of biological role, binds to 23S rRNA. Forms part of two intersubunit bridges in the 70S ribosome. In Methanococcus maripaludis (strain C5 / ATCC BAA-1333), this protein is Large ribosomal subunit protein uL14.